We begin with the raw amino-acid sequence, 482 residues long: E1B 55 kDa protein (482 aa).

The segment at 73 to 94 (VLDSGEGPSCADDRDKQEKKES) is disordered. Residues 83–94 (ADDRDKQEKKES) are compositionally biased toward basic and acidic residues. Serine 476 and serine 477 each carry phosphoserine.

It belongs to the adenoviridae E1B 55 kDa protein family. In terms of assembly, interacts with host PML-4 and PML-5; this interaction promotes efficient subnuclear targeting of E1B-55K to PML nuclear bodies. Interacts with E4-ORF3 protein. Interacts with E4-ORF6 protein.

The protein resides in the host nucleus. It localises to the host cytoplasm. In terms of biological role, plays a major role to prevent cellular inhibition of viral genome replication. Assembles an SCF-like E3 ubiquitin ligase complex based on the cellular proteins ELOB, ELOC, CUL5 and RBX1, in cooperation with viral E4orf6. This viral RING-type ligase ubiquitinates cellular substrates and targets them to proteasomal degradation: TP53/p53, LIG4, MRE11-RAD50-NBS1 (MRN) complex, ITGA3, DAXX and BLM. E1B-55K probably acts as the substrate-specific adapter of the SCF-like E3 ubiquitin ligase complex. Degradation of host TP53/p53 activity is essential for preventing E1A-induced TP53 accumulation that would otherwise lead to cell apoptosis and growth arrest. E1B-55K also inactivates TP53 transcription-factor activity by binding its transactivation domain. E1B-55K also functions as a SUMO1 E3 ligase for TP53 which causes the latter to be sequestered in promyelocytic leukemia (PML) nuclear bodies thereby contributing to maximal inhibition of TP53 function. This Homo sapiens (Human) protein is E1B 55 kDa protein.